We begin with the raw amino-acid sequence, 399 residues long: Serpin-Z4 (399 aa).

The segment at 36 to 56 (GNVAFSPLSLHVALSLITAGA) is signal for targeting protein Z4 into the ER lumen. The interval 343–367 (GTEAGAATVAMGVAMSMPLKVDLVD) is RCL.

Belongs to the serpin family. As to expression, highly expressed in embryo and endosperm. Is accumulated and stored in the endosperm, where it exists in a free and a bound form. Expressed in roots, coleoptiles, shoots and leaves.

Its function is as follows. A major component of the endosperm albumin, this protein acts as a storage protein during grain filling, contributing a substantial part of the grain's lysine. May have an inhibitory function during filling or germination. Inhibits cathepsin G in vitro. This chain is Serpin-Z4 (PAZ1), found in Hordeum vulgare (Barley).